The chain runs to 505 residues: Histidine ammonia-lyase (505 aa).

A cross-link (5-imidazolinone (Ala-Gly)) is located at residues 141-143 (ASG). At S142 the chain carries 2,3-didehydroalanine (Ser).

It belongs to the PAL/histidase family. In terms of processing, contains an active site 4-methylidene-imidazol-5-one (MIO), which is formed autocatalytically by cyclization and dehydration of residues Ala-Ser-Gly.

Its subcellular location is the cytoplasm. It catalyses the reaction L-histidine = trans-urocanate + NH4(+). Its pathway is amino-acid degradation; L-histidine degradation into L-glutamate; N-formimidoyl-L-glutamate from L-histidine: step 1/3. The chain is Histidine ammonia-lyase from Bacillus thuringiensis subsp. konkukian (strain 97-27).